Here is a 248-residue protein sequence, read N- to C-terminus: Ubiquinone biosynthesis O-methyltransferase (248 aa).

Residues Arg-40, Gly-71, Asp-92, and Met-135 each contribute to the S-adenosyl-L-methionine site.

This sequence belongs to the methyltransferase superfamily. UbiG/COQ3 family.

The catalysed reaction is a 3-demethylubiquinol + S-adenosyl-L-methionine = a ubiquinol + S-adenosyl-L-homocysteine + H(+). It carries out the reaction a 3-(all-trans-polyprenyl)benzene-1,2-diol + S-adenosyl-L-methionine = a 2-methoxy-6-(all-trans-polyprenyl)phenol + S-adenosyl-L-homocysteine + H(+). It functions in the pathway cofactor biosynthesis; ubiquinone biosynthesis. Functionally, O-methyltransferase that catalyzes the 2 O-methylation steps in the ubiquinone biosynthetic pathway. This Ruegeria pomeroyi (strain ATCC 700808 / DSM 15171 / DSS-3) (Silicibacter pomeroyi) protein is Ubiquinone biosynthesis O-methyltransferase.